Here is a 249-residue protein sequence, read N- to C-terminus: Small ribosomal subunit protein uS3 (249 aa).

One can recognise a KH type-2 domain in the interval 23 to 94 (LNEFFTRELS…TVELYAEKVQ (72 aa)). Ser-32, Ser-37, Ser-106, and Ser-141 each carry phosphoserine.

Belongs to the universal ribosomal protein uS3 family. In terms of assembly, component of the small ribosomal subunit (SSU). Mature yeast ribosomes consist of a small (40S) and a large (60S) subunit. The 40S small subunit contains 1 molecule of ribosomal RNA (18S rRNA) and at least 33 different proteins. The large 60S subunit contains 3 rRNA molecules (25S, 5.8S and 5S rRNA) and at least 46 different proteins.

It localises to the cytoplasm. Component of the ribosome, a large ribonucleoprotein complex responsible for the synthesis of proteins in the cell. The small ribosomal subunit (SSU) binds messenger RNAs (mRNAs) and translates the encoded message by selecting cognate aminoacyl-transfer RNA (tRNA) molecules. The large subunit (LSU) contains the ribosomal catalytic site termed the peptidyl transferase center (PTC), which catalyzes the formation of peptide bonds, thereby polymerizing the amino acids delivered by tRNAs into a polypeptide chain. The nascent polypeptides leave the ribosome through a tunnel in the LSU and interact with protein factors that function in enzymatic processing, targeting, and the membrane insertion of nascent chains at the exit of the ribosomal tunnel. The sequence is that of Small ribosomal subunit protein uS3 (rps3) from Schizosaccharomyces pombe (strain 972 / ATCC 24843) (Fission yeast).